A 1404-amino-acid polypeptide reads, in one-letter code: DNA-directed RNA polymerase subunit beta' (1404 aa).

4 residues coordinate Zn(2+): Cys60, Cys62, Cys75, and Cys78. Mg(2+) is bound by residues Asp449, Asp451, and Asp453. 4 residues coordinate Zn(2+): Cys778, Cys852, Cys859, and Cys862. The segment at 1380-1404 is disordered; the sequence is LDRPLEEEEEEEIPQAIAEESDAEE. Over residues 1384 to 1404 the composition is skewed to acidic residues; sequence LEEEEEEEIPQAIAEESDAEE.

This sequence belongs to the RNA polymerase beta' chain family. As to quaternary structure, the RNAP catalytic core consists of 2 alpha, 1 beta, 1 beta' and 1 omega subunit. When a sigma factor is associated with the core the holoenzyme is formed, which can initiate transcription. Mg(2+) serves as cofactor. It depends on Zn(2+) as a cofactor.

The enzyme catalyses RNA(n) + a ribonucleoside 5'-triphosphate = RNA(n+1) + diphosphate. In terms of biological role, DNA-dependent RNA polymerase catalyzes the transcription of DNA into RNA using the four ribonucleoside triphosphates as substrates. The sequence is that of DNA-directed RNA polymerase subunit beta' from Leptospira interrogans serogroup Icterohaemorrhagiae serovar Lai (strain 56601).